We begin with the raw amino-acid sequence, 123 residues long: Small ribosomal subunit protein uS12cz/uS12cy/uS12cx/uS12w (123 aa).

Positions 1–13 are enriched in polar residues; that stretch reads MPTSNQLLRNSRQ. Positions 1-30 are disordered; the sequence is MPTSNQLLRNSRQPVRKTKKTPALRGCPQR. The segment covering 14–30 has biased composition (basic residues); that stretch reads PVRKTKKTPALRGCPQR.

This sequence belongs to the universal ribosomal protein uS12 family. In terms of assembly, part of the 30S ribosomal subunit.

The protein localises to the plastid. It is found in the chloroplast. Functionally, with S4 and S5 plays an important role in translational accuracy. Located at the interface of the 30S and 50S subunits. This chain is Small ribosomal subunit protein uS12cz/uS12cy/uS12cx/uS12w (rps12-A), found in Pelargonium hortorum (Common geranium).